A 462-amino-acid polypeptide reads, in one-letter code: Asparagine--tRNA ligase (462 aa).

Belongs to the class-II aminoacyl-tRNA synthetase family. In terms of assembly, homodimer.

It is found in the cytoplasm. The enzyme catalyses tRNA(Asn) + L-asparagine + ATP = L-asparaginyl-tRNA(Asn) + AMP + diphosphate + H(+). In Borrelia garinii subsp. bavariensis (strain ATCC BAA-2496 / DSM 23469 / PBi) (Borreliella bavariensis), this protein is Asparagine--tRNA ligase.